We begin with the raw amino-acid sequence, 267 residues long: Probable ribose-5-phosphate isomerase 1 (267 aa).

Glycine 2 is modified (N-acetylglycine). Serine 92 carries the phosphoserine modification.

This sequence belongs to the ribose 5-phosphate isomerase family. Expressed in roots, cotyledons, leaves and flowers.

It localises to the cytoplasm. The catalysed reaction is aldehydo-D-ribose 5-phosphate = D-ribulose 5-phosphate. It functions in the pathway carbohydrate degradation; pentose phosphate pathway; D-ribose 5-phosphate from D-ribulose 5-phosphate (non-oxidative stage): step 1/1. Functionally, catalyzes the reversible conversion of ribose-5-phosphate to ribulose 5-phosphate. The sequence is that of Probable ribose-5-phosphate isomerase 1 (RPI1) from Arabidopsis thaliana (Mouse-ear cress).